Here is a 132-residue protein sequence, read N- to C-terminus: Ragulator complex protein LAMTOR3 homolog (132 aa).

The protein belongs to the LAMTOR3 family. Part of the Ragulator complex.

Its function is as follows. Regulator of the TOR pathway, a signaling cascade that promotes cell growth in response to growth factors, energy levels, and amino acids. May activate the TOR signaling cascade in response to amino acids. The protein is Ragulator complex protein LAMTOR3 homolog of Dictyostelium discoideum (Social amoeba).